A 285-amino-acid chain; its full sequence is Non-homologous end joining protein Ku (285 aa).

In terms of domain architecture, Ku spans 9 to 176 (ISFGLVNVPV…PAEIRHLEAS (168 aa)). The disordered stretch occupies residues 250–285 (AMTDQKKQQNTAESETEEKPTKSTLTPRGRRKVKGA).

Belongs to the prokaryotic Ku family. In terms of assembly, homodimer. Interacts with LigD.

Its function is as follows. With LigD forms a non-homologous end joining (NHEJ) DNA repair enzyme, which repairs dsDNA breaks with reduced fidelity. Binds linear dsDNA with 5'- and 3'- overhangs but not closed circular dsDNA nor ssDNA. Recruits and stimulates the ligase activity of LigD. The protein is Non-homologous end joining protein Ku of Desulfitobacterium hafniense (strain DSM 10664 / DCB-2).